We begin with the raw amino-acid sequence, 578 residues long: 2-succinyl-5-enolpyruvyl-6-hydroxy-3-cyclohexene-1-carboxylate synthase (578 aa).

Belongs to the TPP enzyme family. MenD subfamily. Homodimer. Mg(2+) is required as a cofactor. Mn(2+) serves as cofactor. The cofactor is thiamine diphosphate.

It catalyses the reaction isochorismate + 2-oxoglutarate + H(+) = 5-enolpyruvoyl-6-hydroxy-2-succinyl-cyclohex-3-ene-1-carboxylate + CO2. It functions in the pathway quinol/quinone metabolism; 1,4-dihydroxy-2-naphthoate biosynthesis; 1,4-dihydroxy-2-naphthoate from chorismate: step 2/7. It participates in quinol/quinone metabolism; menaquinone biosynthesis. In terms of biological role, catalyzes the thiamine diphosphate-dependent decarboxylation of 2-oxoglutarate and the subsequent addition of the resulting succinic semialdehyde-thiamine pyrophosphate anion to isochorismate to yield 2-succinyl-5-enolpyruvyl-6-hydroxy-3-cyclohexene-1-carboxylate (SEPHCHC). The protein is 2-succinyl-5-enolpyruvyl-6-hydroxy-3-cyclohexene-1-carboxylate synthase of Bacillus velezensis (strain DSM 23117 / BGSC 10A6 / LMG 26770 / FZB42) (Bacillus amyloliquefaciens subsp. plantarum).